A 139-amino-acid chain; its full sequence is Large ribosomal subunit protein bL17 (139 aa).

Residues 117 to 139 (DRDPEAKGQDSGPVEIKDESEEG) are disordered.

This sequence belongs to the bacterial ribosomal protein bL17 family. In terms of assembly, part of the 50S ribosomal subunit. Contacts protein L32.

In Rhodospirillum centenum (strain ATCC 51521 / SW), this protein is Large ribosomal subunit protein bL17.